A 1870-amino-acid chain; its full sequence is Non-reducing polyketide synthase pkgA (1870 aa).

Positions 40-279 (IQDLIRRLHR…SRHSALPISG (240 aa)) are N-terminal acylcarrier protein transacylase domain (SAT). One can recognise a Ketosynthase family 3 (KS3) domain in the interval 416–838 (DAKLAVVGMA…GGNTTLLLED (423 aa)). Residues 453–492 (PPDRFDLDAHFDPSGEKENTTTKGSQSNRPLSRQAEQTDP) form a disordered region. A compositionally biased stretch (basic and acidic residues) spans 455-472 (DRFDLDAHFDPSGEKENT). The segment covering 473–492 (TTKGSQSNRPLSRQAEQTDP) has biased composition (polar residues). Active-site for beta-ketoacyl synthase activity residues include cysteine 577, histidine 712, and histidine 755. The malonyl-CoA:ACP transacylase (MAT) domain stretch occupies residues 947–1282 (AFSGQGCLYH…QSFASLRRGD (336 aa)). Positions 1004-1027 (RCPHRESTPSSDASHDSNTNRTST) are disordered. Positions 1011-1027 (TPSSDASHDSNTNRTST) are enriched in polar residues. Residues 1364–1704 (TSSVQQIIFE…PRALMPVLFP (341 aa)) form a product template (PT) domain region. The tract at residues 1368–1502 (QQIIFEEYDE…ATVCYEEAQD (135 aa)) is N-terminal hotdog fold. One can recognise a PKS/mFAS DH domain in the interval 1368–1700 (QQIIFEEYDE…FKAVPRALMP (333 aa)). The Proton acceptor; for dehydratase activity role is filled by histidine 1400. A C-terminal hotdog fold region spans residues 1538–1700 (KGGPRVNNFF…FKAVPRALMP (163 aa)). Catalysis depends on aspartate 1602, which acts as the Proton donor; for dehydratase activity. One can recognise a Carrier domain in the interval 1795-1870 (QSQNAQATAC…VQDLVTWLSK (76 aa)). Residue serine 1832 is modified to O-(pantetheine 4'-phosphoryl)serine.

It depends on pantetheine 4'-phosphate as a cofactor.

It carries out the reaction holo-[ACP] + 6 malonyl-CoA + acetyl-CoA + 6 H(+) = 3,5,7,9,11,13-hexaoxotetradecanoyl-[ACP] + 6 CO2 + 7 CoA. The catalysed reaction is holo-[ACP] + 5 malonyl-CoA + acetyl-CoA + 5 H(+) = 3,5,7,9,11-pentaoxododecanoyl-[ACP] + 5 CO2 + 6 CoA. It functions in the pathway secondary metabolite biosynthesis. Non-reducing polyketide synthase; part of the pkg gene cluster that mediates the biosynthesis of dihydrocitreoisocoumarin and 6,8-dihydroxy-3-(2-oxopropyl)-isocoumarin. The non-reducing polyketide synthase pkgA performs the condensation of one acetyl-CoA starter unit with 6 and 5 malonyl-CoA units, respectively. As pkgA lacks a releasing domain, the thioesterase pkgB is necessary to break the thioester bond and release dihydrocitreoisocoumarin and 6,8-dihydroxy-3-(2-oxopropyl)-isocoumarin from pkgA. In Emericella nidulans (strain FGSC A4 / ATCC 38163 / CBS 112.46 / NRRL 194 / M139) (Aspergillus nidulans), this protein is Non-reducing polyketide synthase pkgA.